Consider the following 547-residue polypeptide: MATKLIKHGSEAREEMLKGVDILANAVKVTLGPKGRNVLIEQSFGAPKITKDGVTVAKSIELKEKIRNAGAQLLKSAATKAAEVAGDGTTTATVLARALAREGNKLVAAGYNPMDLKRGMDLAVNTVVEEIKKSSKKINSQEEIAQVGTISSNGDKEIGEKIAKAMEEVGKEGVITVEEAKNFSFDVEVVKGMMFDRGYLSPYFVTNSEKMVAELENPFILLFEKKLSNLQPMLPILEAVVQSQRPLLIIAEDVEGEALATLVVNRLRGGLKVAAVKAPGFGDRRKAMMEDIAILTKGELITEDLGMKLENVSIKSLGTAKRVTISKENTVIVDGSGDKKSIEDRVLQIKSQIAETTSDYDKEKLQERLAKLSGGVAVLKVGGATEVEVKERKDRVEDALAATRAAVEEGVVAGGGVTLLHTSQILTKLKVENKDQQAGIEIVIEALKDPLKQIVENAGENGGVVVGKLLEHKDKNFGFNAQDMQYVDMIQAGIIDPAKVVRTALQDAASVASLIITTETLIVDEPSKEEPMPMRGSGMGGMGGMDF.

ATP-binding positions include 30–33 (TLGP), K51, 87–91 (DGTTT), G415, and D496. The disordered stretch occupies residues 528 to 547 (KEEPMPMRGSGMGGMGGMDF). Residues 537 to 547 (SGMGGMGGMDF) are compositionally biased toward gly residues.

It belongs to the chaperonin (HSP60) family. As to quaternary structure, forms a cylinder of 14 subunits composed of two heptameric rings stacked back-to-back. Interacts with the co-chaperonin GroES.

Its subcellular location is the cytoplasm. The enzyme catalyses ATP + H2O + a folded polypeptide = ADP + phosphate + an unfolded polypeptide.. Its function is as follows. Together with its co-chaperonin GroES, plays an essential role in assisting protein folding. The GroEL-GroES system forms a nano-cage that allows encapsulation of the non-native substrate proteins and provides a physical environment optimized to promote and accelerate protein folding. The protein is Chaperonin GroEL of Rickettsia canadensis (strain McKiel).